The primary structure comprises 173 residues: NADH-ubiquinone oxidoreductase chain 6 (173 aa).

5 helical membrane passes run 1–21 (MTYFVLFLGLCFVLGSLAVAS), 27–47 (YGVVGLVLASIAGCGWLLSLG), 48–68 (VSFVSLVLFMVYLGGMLVVFV), 87–107 (VVGYGVGFVAVLMVGLIVGGF), and 139–159 (CGVGMFLVAGWGLLLTLFVVL).

The protein belongs to the complex I subunit 6 family.

Its subcellular location is the mitochondrion membrane. The enzyme catalyses a ubiquinone + NADH + 5 H(+)(in) = a ubiquinol + NAD(+) + 4 H(+)(out). In terms of biological role, core subunit of the mitochondrial membrane respiratory chain NADH dehydrogenase (Complex I) that is believed to belong to the minimal assembly required for catalysis. Complex I functions in the transfer of electrons from NADH to the respiratory chain. The immediate electron acceptor for the enzyme is believed to be ubiquinone. The protein is NADH-ubiquinone oxidoreductase chain 6 (MT-ND6) of Aethia cristatella (Crested auklet).